We begin with the raw amino-acid sequence, 393 residues long: Pyrin and HIN domain-containing protein 1-like (393 aa).

The region spanning 1–87 is the Pyrin domain; sequence MVNEYKRIVL…ANKLKNEKAK (87 aa). The tract at residues 82 to 188 is disordered; that stretch reads KNEKAKAKRK…TPTRSSSRIL (107 aa). The span at 87 to 102 shows a compositional bias: basic residues; it reads KAKRKGKGKRKTAAKR. 2 stretches are compositionally biased toward polar residues: residues 108-118 and 126-151; these read PSTSQPMSTTN and GRST…AIQI. Positions 152–169 are enriched in low complexity; the sequence is SPTIASSSGQTSSRSSET. The segment covering 170 to 186 has biased composition (polar residues); that stretch reads LQSIIQSPETPTRSSSR. Positions 219 to 393 constitute an HIN-200 domain; sequence NVPKEPSEEN…NPGDKLRLML (175 aa).

This sequence belongs to the HIN-200 family.

The protein localises to the nucleus. The chain is Pyrin and HIN domain-containing protein 1-like from Mus musculus (Mouse).